Reading from the N-terminus, the 340-residue chain is Dual specificity protein phosphatase 12 (340 aa).

Met1 is subject to N-acetylmethionine. Positions 26-171 (QMLEVQPGLY…LKLYQAMGYE (146 aa)) constitute a Tyrosine-protein phosphatase domain. Catalysis depends on Cys115, which acts as the Phosphocysteine intermediate. 116 to 121 (HAGVSR) is a binding site for substrate. Ser335 bears the Phosphoserine mark.

This sequence belongs to the protein-tyrosine phosphatase family. Non-receptor class dual specificity subfamily. Monomer. Requires Zn(2+) as cofactor. As to expression, ubiquitous, highest expression in spleen, testis, ovary, and peripheral blood leukocytes and lower expression in liver and lung.

It localises to the nucleus. The protein localises to the cytoplasm. The protein resides in the cytosol. The enzyme catalyses O-phospho-L-tyrosyl-[protein] + H2O = L-tyrosyl-[protein] + phosphate. The catalysed reaction is O-phospho-L-seryl-[protein] + H2O = L-seryl-[protein] + phosphate. It catalyses the reaction O-phospho-L-threonyl-[protein] + H2O = L-threonyl-[protein] + phosphate. In terms of biological role, dual specificity phosphatase; can dephosphorylate both phosphotyrosine and phosphoserine or phosphothreonine residues. Can dephosphorylate glucokinase (in vitro). Has phosphatase activity with the synthetic substrate 6,8-difluoro-4-methylumbelliferyl phosphate and other in vitro substrates. The sequence is that of Dual specificity protein phosphatase 12 (DUSP12) from Homo sapiens (Human).